The following is a 795-amino-acid chain: Phenylalanine--tRNA ligase beta subunit (795 aa).

One can recognise a tRNA-binding domain in the interval 39 to 148 (AGAFHGVVVG…ADAPLGTDIR (110 aa)). Residues 401–476 (PARATIALRR…RVYGYNNIPN (76 aa)) enclose the B5 domain. D454, D460, E463, and E464 together coordinate Mg(2+). One can recognise an FDX-ACB domain in the interval 701–794 (SRFPANRRDI…LKQRFQASLR (94 aa)).

The protein belongs to the phenylalanyl-tRNA synthetase beta subunit family. Type 1 subfamily. In terms of assembly, tetramer of two alpha and two beta subunits. It depends on Mg(2+) as a cofactor.

Its subcellular location is the cytoplasm. It catalyses the reaction tRNA(Phe) + L-phenylalanine + ATP = L-phenylalanyl-tRNA(Phe) + AMP + diphosphate + H(+). In Dickeya dadantii (strain 3937) (Erwinia chrysanthemi (strain 3937)), this protein is Phenylalanine--tRNA ligase beta subunit (pheT).